We begin with the raw amino-acid sequence, 675 residues long: Probable metal-nicotianamine transporter YSL16 (675 aa).

Gly residues predominate over residues 1-11; that stretch reads MDRHALGGGGA. The disordered stretch occupies residues 1–20; it reads MDRHALGGGGALEIEKTPEA. Transmembrane regions (helical) follow at residues 50–70, 73–93, 118–138, 162–182, 231–251, 283–303, 329–349, 393–413, 421–441, 453–473, 507–527, 567–587, 605–625, and 633–653; these read GMVA…KLSL, GLIP…LRGW, CAVA…LLGL, GIGW…LTLL, ISFL…CGFL, LVNL…WPLI, FICI…VIVV, MAYT…PVMF, VIIA…GTGL, IALF…AGLV, VGQV…FFLF, LQLC…RDFL, FLVG…VFLW, and AALL…IWTF.

This sequence belongs to the YSL (TC 2.A.67.2) family. In terms of tissue distribution, expressed in roots.

Its subcellular location is the membrane. May be involved in the transport of nicotianamine-chelated metals. This chain is Probable metal-nicotianamine transporter YSL16 (YSL16), found in Oryza sativa subsp. japonica (Rice).